The primary structure comprises 455 residues: Exodeoxyribonuclease 7 large subunit (455 aa).

The protein belongs to the XseA family. In terms of assembly, heterooligomer composed of large and small subunits.

Its subcellular location is the cytoplasm. It carries out the reaction Exonucleolytic cleavage in either 5'- to 3'- or 3'- to 5'-direction to yield nucleoside 5'-phosphates.. Its function is as follows. Bidirectionally degrades single-stranded DNA into large acid-insoluble oligonucleotides, which are then degraded further into small acid-soluble oligonucleotides. The protein is Exodeoxyribonuclease 7 large subunit of Oceanobacillus iheyensis (strain DSM 14371 / CIP 107618 / JCM 11309 / KCTC 3954 / HTE831).